The chain runs to 278 residues: Large ribosomal subunit protein uL2 (278 aa).

2 disordered regions span residues 1–58 (MAIR…GGGH) and 225–278 (VMNP…KNKR). The span at 37-58 (LHGRGGRNAHGRITTRHKGGGH) shows a compositional bias: basic residues. The span at 253–267 (PEGRTRKNKASDKLI) shows a compositional bias: basic and acidic residues. Basic residues predominate over residues 268–278 (VRRRRTGKNKR).

It belongs to the universal ribosomal protein uL2 family. As to quaternary structure, part of the 50S ribosomal subunit. Forms a bridge to the 30S subunit in the 70S ribosome.

Functionally, one of the primary rRNA binding proteins. Required for association of the 30S and 50S subunits to form the 70S ribosome, for tRNA binding and peptide bond formation. It has been suggested to have peptidyltransferase activity; this is somewhat controversial. Makes several contacts with the 16S rRNA in the 70S ribosome. This Rhodococcus opacus (strain B4) protein is Large ribosomal subunit protein uL2.